The chain runs to 48 residues: uncharacterized protein (48 aa).

This is an uncharacterized protein from Schizosaccharomyces pombe (strain 972 / ATCC 24843) (Fission yeast).